Consider the following 157-residue polypeptide: uncharacterized protein (157 aa).

This is an uncharacterized protein from Rickettsia prowazekii (strain Madrid E).